A 412-amino-acid polypeptide reads, in one-letter code: WW domain-containing oxidoreductase (412 aa).

Residues 1-24 (MAALKYAGMEDTDSEDELPPGWEE) are disordered. Residues 16–49 (DELPPGWEERSTKDGWVYYANHEEMKTQWEHPKT) enclose the WW 1 domain. Positions 50-55 (GKKKRC) match the Nuclear localization signal motif. A WW 2 domain is found at 57-90 (GALPYGWEQETDDKGQIFYVDHINKRKTYFDPRQ). Residue 128 to 134 (GANSGIG) participates in NADP(+) binding. A substrate-binding site is contributed by S257. The Proton acceptor role is filled by Y290.

It belongs to the short-chain dehydrogenases/reductases (SDR) family.

The protein resides in the cytoplasm. Its subcellular location is the mitochondrion. The protein localises to the golgi apparatus. It localises to the lysosome. In terms of biological role, putative oxidoreductase. Acts as a tumor suppressor and plays a role in apoptosis. May function synergistically with p53/TP53 to control genotoxic stress-induced cell death. Plays a role in TGFB1 signaling and TGFB1-mediated cell death. May also play a role in tumor necrosis factor (TNF)-mediated cell death. Required for normal bone development. Inhibits Wnt signaling. The sequence is that of WW domain-containing oxidoreductase (wwox) from Danio rerio (Zebrafish).